Reading from the N-terminus, the 873-residue chain is Alanine--tRNA ligase (873 aa).

Zn(2+)-binding residues include H562, H566, C664, and H668.

Belongs to the class-II aminoacyl-tRNA synthetase family. It depends on Zn(2+) as a cofactor.

It localises to the cytoplasm. The catalysed reaction is tRNA(Ala) + L-alanine + ATP = L-alanyl-tRNA(Ala) + AMP + diphosphate. Functionally, catalyzes the attachment of alanine to tRNA(Ala) in a two-step reaction: alanine is first activated by ATP to form Ala-AMP and then transferred to the acceptor end of tRNA(Ala). Also edits incorrectly charged Ser-tRNA(Ala) and Gly-tRNA(Ala) via its editing domain. The polypeptide is Alanine--tRNA ligase (Photobacterium profundum (strain SS9)).